Reading from the N-terminus, the 243-residue chain is Ribosomal RNA small subunit methyltransferase J (243 aa).

S-adenosyl-L-methionine-binding positions include 112 to 113 (ER) and Asp164.

Belongs to the methyltransferase superfamily. RsmJ family.

It is found in the cytoplasm. The catalysed reaction is guanosine(1516) in 16S rRNA + S-adenosyl-L-methionine = N(2)-methylguanosine(1516) in 16S rRNA + S-adenosyl-L-homocysteine + H(+). Its function is as follows. Specifically methylates the guanosine in position 1516 of 16S rRNA. This Legionella pneumophila (strain Lens) protein is Ribosomal RNA small subunit methyltransferase J.